A 138-amino-acid chain; its full sequence is PilB-specific inhibitory protein CpiA (138 aa).

Interacts with PilB but not with TfpB.

Acts as a PilB inhibitor to control natural transformation. Inhibits type IV pili (T4P) extension by specifically binding and inhibiting the pilus extension ATPase PilB but not TfpB. This activity probably modulates T4P extension under different environmental conditions. This is PilB-specific inhibitory protein CpiA from Acinetobacter baylyi (strain ATCC 33305 / BD413 / ADP1).